Here is a 67-residue protein sequence, read N- to C-terminus: Non-specific lipid-transfer protein 2P (67 aa).

Cystine bridges form between Cys2–Cys34, Cys10–Cys24, Cys25–Cys60, and Cys36–Cys67.

Transfer lipids across membranes. May play a role in plant defense or in the biosynthesis of cuticle layers. This Triticum aestivum (Wheat) protein is Non-specific lipid-transfer protein 2P.